Consider the following 212-residue polypeptide: Phosphatidylserine decarboxylase proenzyme (212 aa).

Residue Ser-182 is the Schiff-base intermediate with substrate; via pyruvic acid of the active site. At Ser-182 the chain carries Pyruvic acid (Ser); by autocatalysis.

It belongs to the phosphatidylserine decarboxylase family. PSD-A subfamily. As to quaternary structure, heterodimer of a large membrane-associated beta subunit and a small pyruvoyl-containing alpha subunit. Requires pyruvate as cofactor. In terms of processing, is synthesized initially as an inactive proenzyme. Formation of the active enzyme involves a self-maturation process in which the active site pyruvoyl group is generated from an internal serine residue via an autocatalytic post-translational modification. Two non-identical subunits are generated from the proenzyme in this reaction, and the pyruvate is formed at the N-terminus of the alpha chain, which is derived from the carboxyl end of the proenzyme. The post-translation cleavage follows an unusual pathway, termed non-hydrolytic serinolysis, in which the side chain hydroxyl group of the serine supplies its oxygen atom to form the C-terminus of the beta chain, while the remainder of the serine residue undergoes an oxidative deamination to produce ammonia and the pyruvoyl prosthetic group on the alpha chain.

The protein localises to the cell membrane. It catalyses the reaction a 1,2-diacyl-sn-glycero-3-phospho-L-serine + H(+) = a 1,2-diacyl-sn-glycero-3-phosphoethanolamine + CO2. It participates in phospholipid metabolism; phosphatidylethanolamine biosynthesis; phosphatidylethanolamine from CDP-diacylglycerol: step 2/2. Its function is as follows. Catalyzes the formation of phosphatidylethanolamine (PtdEtn) from phosphatidylserine (PtdSer). The chain is Phosphatidylserine decarboxylase proenzyme from Paraburkholderia phytofirmans (strain DSM 17436 / LMG 22146 / PsJN) (Burkholderia phytofirmans).